A 724-amino-acid polypeptide reads, in one-letter code: Degenerin mec-10 (724 aa).

At 1 to 125 (MNRGPPNPRM…GQAPNSLYRA (125 aa)) the chain is on the cytoplasmic side. Residues 126–146 (VWVFLLLICAIQFINQAVAVI) form a helical membrane-spanning segment. At 147-684 (QKYQKMDKIT…FGGHLGLWSG (538 aa)) the chain is on the extracellular side. 5 N-linked (GlcNAc...) asparagine glycosylation sites follow: Asn294, Asn370, Asn463, Asn605, and Asn624. The helical transmembrane segment at 685–705 (VSVMTCCEFVCLVLELLYMAV) threads the bilayer. At 706 to 724 (THHITQERIRRRENAANEF) the chain is on the cytoplasmic side.

This sequence belongs to the amiloride-sensitive sodium channel (TC 1.A.6) family. In terms of assembly, the channel is probably composed of at least the mec-2, mec-4, mec-6 and mec-10 subunits.

It localises to the cell membrane. In terms of biological role, amiloride-sensitive sodium channel subunit required for mechanosensory transduction (touch sensitivity). Negatively regulates the turning step of male mating behavior. The polypeptide is Degenerin mec-10 (Caenorhabditis briggsae).